The following is a 418-amino-acid chain: UDP-N-acetylglucosamine 1-carboxyvinyltransferase 2 (418 aa).

Residue 22–23 (KN) coordinates phosphoenolpyruvate. Arg93 serves as a coordination point for UDP-N-acetyl-alpha-D-glucosamine. Cys117 serves as the catalytic Proton donor. A 2-(S-cysteinyl)pyruvic acid O-phosphothioketal modification is found at Cys117. UDP-N-acetyl-alpha-D-glucosamine is bound by residues 122 to 126 (RPIDQ), Asp305, and Ile327.

This sequence belongs to the EPSP synthase family. MurA subfamily.

Its subcellular location is the cytoplasm. The catalysed reaction is phosphoenolpyruvate + UDP-N-acetyl-alpha-D-glucosamine = UDP-N-acetyl-3-O-(1-carboxyvinyl)-alpha-D-glucosamine + phosphate. The protein operates within cell wall biogenesis; peptidoglycan biosynthesis. Cell wall formation. Adds enolpyruvyl to UDP-N-acetylglucosamine. The sequence is that of UDP-N-acetylglucosamine 1-carboxyvinyltransferase 2 from Clostridium acetobutylicum (strain ATCC 824 / DSM 792 / JCM 1419 / IAM 19013 / LMG 5710 / NBRC 13948 / NRRL B-527 / VKM B-1787 / 2291 / W).